Here is a 391-residue protein sequence, read N- to C-terminus: Trehalose-phosphate phosphatase (391 aa).

D147 (nucleophile) is an active-site residue. Mg(2+) is bound by residues D147, D149, and D330. 147–149 (DFD) contacts substrate.

This sequence belongs to the trehalose phosphatase family. It depends on Mg(2+) as a cofactor.

It catalyses the reaction alpha,alpha-trehalose 6-phosphate + H2O = alpha,alpha-trehalose + phosphate. Its pathway is glycan biosynthesis; trehalose biosynthesis. Functionally, removes the phosphate from trehalose 6-phosphate to produce free trehalose. The polypeptide is Trehalose-phosphate phosphatase (otsB) (Mycobacterium avium (strain 104)).